The chain runs to 418 residues: Inner capsid protein sigma-2 (418 aa).

The protein belongs to the orthoreovirus sigma-1 protein family. In terms of assembly, interacts with protein mu-NS; in viral inclusions.

The protein resides in the virion. Functionally, inner capsid (core) component. The sequence is that of Inner capsid protein sigma-2 (S2) from Reovirus type 3 (strain Dearing) (T3D).